A 198-amino-acid polypeptide reads, in one-letter code: Nucleoid occlusion factor SlmA (198 aa).

Residues 10 to 70 enclose the HTH tetR-type domain; that stretch reads NRREEILQSL…SLIEFIEDSL (61 aa). The H-T-H motif DNA-binding region spans 33-52; that stretch reads TTAKLAASVGVSEAALYRHF. Residues 117-144 are a coiled coil; the sequence is EQDRLQGRINQLFERIEAQLRQVLREKR.

It belongs to the nucleoid occlusion factor SlmA family. In terms of assembly, homodimer. Interacts with FtsZ.

The protein resides in the cytoplasm. Its subcellular location is the nucleoid. Its function is as follows. Required for nucleoid occlusion (NO) phenomenon, which prevents Z-ring formation and cell division over the nucleoid. Acts as a DNA-associated cell division inhibitor that binds simultaneously chromosomal DNA and FtsZ, and disrupts the assembly of FtsZ polymers. SlmA-DNA-binding sequences (SBS) are dispersed on non-Ter regions of the chromosome, preventing FtsZ polymerization at these regions. This chain is Nucleoid occlusion factor SlmA, found in Salmonella paratyphi A (strain ATCC 9150 / SARB42).